The following is a 427-amino-acid chain: Isoprenylcysteine alpha-carbonyl methylesterase ICME (427 aa).

A disordered region spans residues 26–59 (EVLPDEDSDRTTLLNGEPLRRRVSGKSPVDEGPR). 2 consecutive transmembrane segments (helical) span residues 102–122 (LLAL…VAYS) and 157–177 (VVVF…GSLL). Substrate contacts are provided by residues 163–165 (GGA) and 234–236 (QSA). Residues Ser-235, Asp-336, and His-368 contribute to the active site.

The protein belongs to the AB hydrolase superfamily. Isoprenylcysteine methylesterase family. Expressed in roots, rosette and cauline leaves, stems, flowers and siliques.

It is found in the endoplasmic reticulum membrane. The protein localises to the golgi apparatus membrane. It carries out the reaction [protein]-C-terminal S-[(2E,6E)-farnesyl]-L-cysteine methyl ester + H2O = [protein]-C-terminal S-[(2E,6E)-farnesyl]-L-cysteine + methanol + H(+). Catalyzes the demethylation of isoprenylcysteine methylesters. In vitro, is specific for N-acetyl-S-farnesyl-L-cysteine methyl ester (AFCme) and has low activity toward N-acetyl-S-geranyl-L-cysteine methyl ester (AGCme). Acts as a positive regulator of ABA signaling. May be involved in the demethylation and inactivation of isoprenylated negative regulators of abscisic acid (ABA) signaling. Carboxyl methylation is a reversible and potentially regulated step in the post-translational modification of prenylated proteins. The polypeptide is Isoprenylcysteine alpha-carbonyl methylesterase ICME (Arabidopsis thaliana (Mouse-ear cress)).